Consider the following 414-residue polypeptide: Esterase FrsA (414 aa).

It belongs to the FrsA family.

The enzyme catalyses a carboxylic ester + H2O = an alcohol + a carboxylate + H(+). In terms of biological role, catalyzes the hydrolysis of esters. The protein is Esterase FrsA of Escherichia coli O81 (strain ED1a).